The sequence spans 196 residues: Glycerol-3-phosphate acyltransferase 2 (196 aa).

The next 5 membrane-spanning stretches (helical) occupy residues 2 to 22 (GWWL…SYLI), 52 to 72 (VGGI…FITI), 80 to 100 (IVSL…FMKF), 112 to 132 (IIFC…LVIV), and 137 to 156 (YASL…GYLL).

The protein belongs to the PlsY family. As to quaternary structure, probably interacts with PlsX.

It localises to the cell inner membrane. It carries out the reaction an acyl phosphate + sn-glycerol 3-phosphate = a 1-acyl-sn-glycero-3-phosphate + phosphate. The protein operates within lipid metabolism; phospholipid metabolism. In terms of biological role, catalyzes the transfer of an acyl group from acyl-phosphate (acyl-PO(4)) to glycerol-3-phosphate (G3P) to form lysophosphatidic acid (LPA). This enzyme utilizes acyl-phosphate as fatty acyl donor, but not acyl-CoA or acyl-ACP. The sequence is that of Glycerol-3-phosphate acyltransferase 2 from Thermotoga maritima (strain ATCC 43589 / DSM 3109 / JCM 10099 / NBRC 100826 / MSB8).